Consider the following 110-residue polypeptide: Ubiquitin-related modifier 1 (110 aa).

A 1-thioglycine modification is found at G110. Residue G110 forms a Glycyl lysine isopeptide (Gly-Lys) (interchain with K-? in acceptor proteins) linkage.

The protein belongs to the URM1 family. As to quaternary structure, homodimer; homodimerization may provide an autoprotection to the highly active C-terminal residue before attacking its substrates. Forms a conjugate with the target protein AHP1. C-terminal thiocarboxylation occurs in 2 steps, it is first acyl-adenylated (-COAMP) via the hesA/moeB/thiF part of UBA4, then thiocarboxylated (-COSH) via the rhodanese domain of UBA4.

It is found in the cytoplasm. It functions in the pathway tRNA modification; 5-methoxycarbonylmethyl-2-thiouridine-tRNA biosynthesis. Functionally, acts as a sulfur carrier required for 2-thiolation of mcm(5)S(2)U at tRNA wobble positions of cytosolic tRNA(Lys), tRNA(Glu) and tRNA(Gln). Serves as sulfur donor in tRNA 2-thiolation reaction by being thiocarboxylated (-COSH) at its C-terminus by the MOCS3 homolog UBA4. The sulfur is then transferred to tRNA to form 2-thiolation of mcm(5)S(2)U. Prior mcm(5) tRNA modification by the elongator complex is required for 2-thiolation. Also acts as a ubiquitin-like protein (UBL) that is covalently conjugated via an isopeptide bond to lysine residues of target proteins such as AHP1. Conjugation does not depend on the canonical cascade of E2 ubiquitin-conjugating enzymes and/or E3 ligases. The conjugation reaction requires a thiocarboxylated C-terminus of URM1 and a peroxidatic cysteine in the target protein, as the sulfur atom of the URM1 thiocarboxyl group is transferred to redox-active cysteine residues in the target protein. Oxidative stress specifically induces the formation of UBL-protein conjugates. Covalent modification with URM1 promotes the phase separation of a wide range of proteins into condensates like stress granules. The sequence is that of Ubiquitin-related modifier 1 from Chaetomium thermophilum (strain DSM 1495 / CBS 144.50 / IMI 039719) (Thermochaetoides thermophila).